The chain runs to 260 residues: UPF0246 protein Mmwyl1_3597 (260 aa).

It belongs to the UPF0246 family.

The protein is UPF0246 protein Mmwyl1_3597 of Marinomonas sp. (strain MWYL1).